A 173-amino-acid chain; its full sequence is Translation initiation factor IF-3 (173 aa).

The protein belongs to the IF-3 family. In terms of assembly, monomer.

The protein localises to the cytoplasm. IF-3 binds to the 30S ribosomal subunit and shifts the equilibrium between 70S ribosomes and their 50S and 30S subunits in favor of the free subunits, thus enhancing the availability of 30S subunits on which protein synthesis initiation begins. The protein is Translation initiation factor IF-3 of Bartonella bacilliformis (strain ATCC 35685 / KC583 / Herrer 020/F12,63).